Consider the following 278-residue polypeptide: HTH-type transcriptional activator RhaS (278 aa).

Residues N174–G272 enclose the HTH araC/xylS-type domain. 2 DNA-binding regions (H-T-H motif) span residues E191–T212 and V239–F262.

Binds DNA as a dimer.

Its subcellular location is the cytoplasm. Its function is as follows. Activates expression of the rhaBAD and rhaT operons. The polypeptide is HTH-type transcriptional activator RhaS (Escherichia fergusonii (strain ATCC 35469 / DSM 13698 / CCUG 18766 / IAM 14443 / JCM 21226 / LMG 7866 / NBRC 102419 / NCTC 12128 / CDC 0568-73)).